The following is a 240-amino-acid chain: tRNA (guanine-N(7)-)-methyltransferase (240 aa).

S-adenosyl-L-methionine-binding residues include Glu71, Glu96, Asp123, and Asp146. Asp146 is an active-site residue. Substrate contacts are provided by residues Lys150, Asp182, and 219-222; that span reads TKFE.

Belongs to the class I-like SAM-binding methyltransferase superfamily. TrmB family.

The catalysed reaction is guanosine(46) in tRNA + S-adenosyl-L-methionine = N(7)-methylguanosine(46) in tRNA + S-adenosyl-L-homocysteine. Its pathway is tRNA modification; N(7)-methylguanine-tRNA biosynthesis. In terms of biological role, catalyzes the formation of N(7)-methylguanine at position 46 (m7G46) in tRNA. The chain is tRNA (guanine-N(7)-)-methyltransferase from Hydrogenovibrio crunogenus (strain DSM 25203 / XCL-2) (Thiomicrospira crunogena).